Consider the following 494-residue polypeptide: Glutamyl-tRNA(Gln) amidotransferase subunit A (494 aa).

Catalysis depends on charge relay system residues Lys-81 and Ser-156. Residue Ser-180 is the Acyl-ester intermediate of the active site.

The protein belongs to the amidase family. GatA subfamily. In terms of assembly, heterotrimer of A, B and C subunits.

It carries out the reaction L-glutamyl-tRNA(Gln) + L-glutamine + ATP + H2O = L-glutaminyl-tRNA(Gln) + L-glutamate + ADP + phosphate + H(+). Its function is as follows. Allows the formation of correctly charged Gln-tRNA(Gln) through the transamidation of misacylated Glu-tRNA(Gln) in organisms which lack glutaminyl-tRNA synthetase. The reaction takes place in the presence of glutamine and ATP through an activated gamma-phospho-Glu-tRNA(Gln). The sequence is that of Glutamyl-tRNA(Gln) amidotransferase subunit A from Mycobacterium bovis (strain ATCC BAA-935 / AF2122/97).